Here is a 469-residue protein sequence, read N- to C-terminus: Neuraminidase (469 aa).

Residues 1–9 lie on the Intravirion side of the membrane; sequence MNPNQKIIT. A helical transmembrane segment spans residues 10 to 30; it reads IGSVSLTIATICFLMQIAILV. An involved in apical transport and lipid raft association region spans residues 11–33; the sequence is GSVSLTIATICFLMQIAILVTTV. At 31–469 the chain is on the virion surface side; the sequence is TTVTLHFKQY…DGADINLMPI (439 aa). A hypervariable stalk region region spans residues 36 to 88; sequence HFKQYECSSPPNNQVMPCEPIIIERNITEIVYLTNTTIEKEICPKLVEYRNWS. N61, N70, and N86 each carry an N-linked (GlcNAc...) asparagine; by host glycan. Residues 91-469 form a head of neuraminidase region; sequence QCKITGFAPF…DGADINLMPI (379 aa). 8 disulfides stabilise this stretch: C92/C417, C124/C129, C183/C230, C232/C237, C278/C291, C280/C289, C318/C337, and C421/C447. R118 contributes to the substrate binding site. The N-linked (GlcNAc...) asparagine; by host glycan is linked to N146. The Proton donor/acceptor role is filled by D151. Substrate is bound at residue R152. N200 and N234 each carry an N-linked (GlcNAc...) asparagine; by host glycan. Residue 276 to 277 participates in substrate binding; the sequence is EE. A substrate-binding site is contributed by R292. Ca(2+) is bound by residues D293, G297, and D324. Substrate is bound at residue R371. Residue N402 is glycosylated (N-linked (GlcNAc...) asparagine; by host). Y406 serves as the catalytic Nucleophile.

The protein belongs to the glycosyl hydrolase 34 family. Homotetramer. It depends on Ca(2+) as a cofactor. N-glycosylated.

It localises to the virion membrane. The protein resides in the host apical cell membrane. It carries out the reaction Hydrolysis of alpha-(2-&gt;3)-, alpha-(2-&gt;6)-, alpha-(2-&gt;8)- glycosidic linkages of terminal sialic acid residues in oligosaccharides, glycoproteins, glycolipids, colominic acid and synthetic substrates.. Inhibited by the neuraminidase inhibitors zanamivir (Relenza) and oseltamivir (Tamiflu). These drugs interfere with the release of progeny virus from infected cells and are effective against all influenza strains. Resistance to neuraminidase inhibitors is quite rare. In terms of biological role, catalyzes the removal of terminal sialic acid residues from viral and cellular glycoconjugates. Cleaves off the terminal sialic acids on the glycosylated HA during virus budding to facilitate virus release. Additionally helps virus spread through the circulation by further removing sialic acids from the cell surface. These cleavages prevent self-aggregation and ensure the efficient spread of the progeny virus from cell to cell. Otherwise, infection would be limited to one round of replication. Described as a receptor-destroying enzyme because it cleaves a terminal sialic acid from the cellular receptors. May facilitate viral invasion of the upper airways by cleaving the sialic acid moieties on the mucin of the airway epithelial cells. Likely to plays a role in the budding process through its association with lipid rafts during intracellular transport. May additionally display a raft-association independent effect on budding. Plays a role in the determination of host range restriction on replication and virulence. Sialidase activity in late endosome/lysosome traffic seems to enhance virus replication. This chain is Neuraminidase, found in Influenza A virus (strain A/Memphis/4/1980 H3N2).